A 206-amino-acid chain; its full sequence is Thymidylate kinase (206 aa).

11–18 (GIDGAGKT) contacts ATP.

This sequence belongs to the thymidylate kinase family.

It catalyses the reaction dTMP + ATP = dTDP + ADP. Functionally, phosphorylation of dTMP to form dTDP in both de novo and salvage pathways of dTTP synthesis. In Burkholderia cenocepacia (strain ATCC BAA-245 / DSM 16553 / LMG 16656 / NCTC 13227 / J2315 / CF5610) (Burkholderia cepacia (strain J2315)), this protein is Thymidylate kinase.